A 628-amino-acid chain; its full sequence is Leucine-rich repeat and fibronectin type-III domain-containing protein 3 (628 aa).

Positions 1 to 16 (MAILPLLLCLLPLAPA) are cleaved as a signal peptide. Topologically, residues 17 to 539 (SSPPQSATPS…PHAPFLGGTM (523 aa)) are extracellular. The LRRNT domain maps to 19-59 (PPQSATPSPCPRRCRCQTQSLPLSVLCPGAGLLFVPPSLDR). 7 LRR repeats span residues 60–83 (RAAE…ANMT), 84–105 (GLLH…AFAD), 108–129 (ALRA…QLRG), 132–153 (NLRH…ALDD), 157–178 (TLED…ALGR), 181–202 (NVNT…AFSR), and 205–226 (KLAR…PLFS). N-linked (GlcNAc...) asparagine glycosylation is present at Asn-81. In terms of domain architecture, LRRCT spans 249–295 (NPLHCNCELVWLRRLAREDDLEACASPPALGGRYFWAVGEEEFVCEP). The Ig-like domain maps to 295-382 (PPVVTHRSPP…GEATAAVELT (88 aa)). Cys-317 and Cys-366 are joined by a disulfide. Asn-339, Asn-348, and Asn-393 each carry an N-linked (GlcNAc...) asparagine glycan. A disordered region spans residues 382 to 430 (TVGPPPPPQLANSTSCDPPRDGDPDALTPPSAASASAKVADTGPPTDRG). The segment covering 406–422 (DALTPPSAASASAKVAD) has biased composition (low complexity). Residues 425–523 (PPTDRGVQVT…GCARFSTEPA (99 aa)) form the Fibronectin type-III domain. An N-linked (GlcNAc...) asparagine glycan is attached at Asn-462. A helical membrane pass occupies residues 540–560 (IIALGGVIVASVLVFIFVLLM). The Cytoplasmic portion of the chain corresponds to 561-628 (RYKVHGGQPP…WGPGHEPVGP (68 aa)).

Belongs to the LRFN family. As to quaternary structure, can form heteromeric complexes with LRFN1, LRFN2, LRFN4 and LRFN5. Able to form homomeric complexes across cell junctions, between adjacent cells. Does not interact with DLG4. In terms of processing, N-glycosylated.

The protein localises to the cell membrane. It is found in the cell projection. Its subcellular location is the axon. It localises to the dendrite. The protein resides in the synapse. The protein localises to the presynaptic cell membrane. It is found in the postsynaptic cell membrane. In terms of biological role, cell adhesion molecule that mediates homophilic cell-cell adhesion in a Ca(2+)-independent manner. Promotes neurite outgrowth in hippocampal neurons. The sequence is that of Leucine-rich repeat and fibronectin type-III domain-containing protein 3 (LRFN3) from Homo sapiens (Human).